The sequence spans 597 residues: Probable translation initiation factor IF-2 (597 aa).

Positions 8-225 (LRQPIVVVLG…LLAGLTQQYL (218 aa)) constitute a tr-type G domain. Residues 17–24 (GHVDHGKT) form a G1 region. A GTP-binding site is contributed by 17–24 (GHVDHGKT). Residues 42 to 46 (EMTQE) form a G2 region. Residues 81–84 (DTPG) are G3. GTP-binding positions include 81 to 85 (DTPGH) and 135 to 138 (NKID). A G4 region spans residues 135–138 (NKID). The segment at 203–205 (SGK) is G5.

It belongs to the TRAFAC class translation factor GTPase superfamily. Classic translation factor GTPase family. IF-2 subfamily.

Function in general translation initiation by promoting the binding of the formylmethionine-tRNA to ribosomes. Seems to function along with eIF-2. This chain is Probable translation initiation factor IF-2, found in Metallosphaera sedula (strain ATCC 51363 / DSM 5348 / JCM 9185 / NBRC 15509 / TH2).